A 213-amino-acid polypeptide reads, in one-letter code: Retinitis pigmentosa 9 protein homolog (213 aa).

The segment at Met1 to Asp61 is disordered. The segment at Met1–Val147 is PIM1-binding. 2 stretches are compositionally biased toward basic and acidic residues: residues Arg9–Arg21 and Ile52–Asp61. The segment at Gln96–Phe114 adopts a CCHC-type zinc-finger fold. Residue Lys121 forms a Glycyl lysine isopeptide (Lys-Gly) (interchain with G-Cter in SUMO2) linkage. Positions Gln154–Glu213 are disordered. The segment covering Lys176–Ser204 has biased composition (basic residues). Residues Ser204 and Ser206 each carry the phosphoserine; by PIM1; in vitro modification.

Binds to PIM1. Binds to ZNHIT4. Highly expressed in the testis, moderately in the kidney, liver and spleen, and weakly in the skeletal muscle and heart.

It localises to the nucleus. In terms of biological role, is thought to be a target protein for the PIM1 kinase. May play some roles in B-cell proliferation in association with PIM1. The polypeptide is Retinitis pigmentosa 9 protein homolog (rp9) (Mus musculus (Mouse)).